We begin with the raw amino-acid sequence, 138 residues long: Acid shock protein (138 aa).

Residues 1–21 form the signal peptide; it reads MKKVLALIVAATMGLSSVAFA. The propeptide occupies 22–85; sequence ADAVAPAAAA…TKKAPAQKAQ (64 aa). The segment covering 31-50 has biased composition (low complexity); it reads APAATTTAAPAAAATKAPAK. Positions 31–138 are disordered; it reads APAATTTAAP…ATKKAAPAAK (108 aa). Basic residues-rich tracts occupy residues 51 to 77 and 122 to 131; these read ATHH…KATK and AAKKHHKATK.

The protein belongs to the Asr family. Post-translationally, proteolytic processing gives rise to the active protein.

The protein resides in the periplasm. Functionally, required for growth and/or survival at acidic conditions. This is Acid shock protein from Serratia proteamaculans (strain 568).